Reading from the N-terminus, the 649-residue chain is Acetyl-coenzyme A synthetase (649 aa).

CoA is bound by residues 189–192, Thr-311, and Asn-335; that span reads RGGK. ATP-binding positions include 387–389, 411–416, Asp-500, and Arg-515; these read GEP and DTWWQT. Residue Ser-523 participates in CoA binding. Residue Arg-526 coordinates ATP. Positions 537, 539, and 542 each coordinate Mg(2+). Arg-584 is a binding site for CoA. Lys-609 carries the post-translational modification N6-acetyllysine.

This sequence belongs to the ATP-dependent AMP-binding enzyme family. Requires Mg(2+) as cofactor. In terms of processing, acetylated. Deacetylation by the SIR2-homolog deacetylase activates the enzyme.

The catalysed reaction is acetate + ATP + CoA = acetyl-CoA + AMP + diphosphate. Catalyzes the conversion of acetate into acetyl-CoA (AcCoA), an essential intermediate at the junction of anabolic and catabolic pathways. AcsA undergoes a two-step reaction. In the first half reaction, AcsA combines acetate with ATP to form acetyl-adenylate (AcAMP) intermediate. In the second half reaction, it can then transfer the acetyl group from AcAMP to the sulfhydryl group of CoA, forming the product AcCoA. This is Acetyl-coenzyme A synthetase from Sinorhizobium fredii (strain NBRC 101917 / NGR234).